Here is a 134-residue protein sequence, read N- to C-terminus: Small ribosomal subunit protein uS8c (134 aa).

It belongs to the universal ribosomal protein uS8 family. In terms of assembly, part of the 30S ribosomal subunit.

It is found in the plastid. Its subcellular location is the chloroplast. Functionally, one of the primary rRNA binding proteins, it binds directly to 16S rRNA central domain where it helps coordinate assembly of the platform of the 30S subunit. The sequence is that of Small ribosomal subunit protein uS8c (rps8) from Arabis hirsuta (Hairy rock-cress).